The chain runs to 84 residues: Small ribosomal subunit protein uS17 (84 aa).

The protein belongs to the universal ribosomal protein uS17 family. In terms of assembly, part of the 30S ribosomal subunit.

In terms of biological role, one of the primary rRNA binding proteins, it binds specifically to the 5'-end of 16S ribosomal RNA. The chain is Small ribosomal subunit protein uS17 from Salmonella typhi.